The following is a 361-amino-acid chain: Septin-2 (361 aa).

Phosphotyrosine is present on Tyr17. The Septin-type G domain maps to Lys34 to Arg306. Residues Gly44–Ser51 form a G1 motif region. Residues Gly44–Ser51, Thr78, Gly104, and Lys183–Glu191 each bind GTP. Residues Asp101–Gly104 are G3 motif. The tract at residues Ala182–Asp185 is G4 motif. Lys190 is modified (N6-acetyllysine). Position 211 is a phosphotyrosine (Tyr211). At Ser218 the chain carries Phosphoserine. GTP-binding residues include Gly241 and Arg256. Positions Trp260–His270 are important for dimerization.

It belongs to the TRAFAC class TrmE-Era-EngA-EngB-Septin-like GTPase superfamily. Septin GTPase family. As to quaternary structure, septins polymerize into heterooligomeric protein complexes that form filaments, and associate with cellular membranes, actin filaments and microtubules. GTPase activity is required for filament formation. Filaments are assembled from asymmetrical heterotrimers, composed of SEPTIN2, SEPTIN6 and SEPTIN7 that associate head-to-head to form a hexameric unit. Interaction between SEPTIN2 and SEPTIN7 seems indirect. Interacts with SEPTIN5. Interaction with SEPTIN4 not detected. Interacts with SEPTIN9. Component of a septin core octameric complex consisting of SEPTIN12, SEPTIN7, SEPTIN6 and SEPTIN2 or SEPTIN4 in the order 12-7-6-2-2-6-7-12 or 12-7-6-4-4-6-7-12 and located in the sperm annulus. Interacts with MAP4. Interacts with DZIP1L.

Its subcellular location is the cytoplasm. It is found in the cytoskeleton. It localises to the spindle. The protein localises to the chromosome. The protein resides in the centromere. Its subcellular location is the kinetochore. It is found in the cleavage furrow. It localises to the midbody. The protein localises to the cell cortex. The protein resides in the cell projection. Its subcellular location is the cilium membrane. It is found in the cilium. It localises to the flagellum. In terms of biological role, filament-forming cytoskeletal GTPase. Forms a filamentous structure with SEPTIN12, SEPTIN6, SEPTIN2 and probably SEPTIN4 at the sperm annulus which is required for the structural integrity and motility of the sperm tail during postmeiotic differentiation. Required for normal organization of the actin cytoskeleton. Plays a role in the biogenesis of polarized columnar-shaped epithelium by maintaining polyglutamylated microtubules, thus facilitating efficient vesicle transport, and by impeding MAP4 binding to tubulin. Required for the progression through mitosis. Forms a scaffold at the midplane of the mitotic splindle required to maintain CENPE localization at kinetochores and consequently chromosome congression. During anaphase, may be required for chromosome segregation and spindle elongation. Plays a role in ciliogenesis and collective cell movements. In cilia, required for the integrity of the diffusion barrier at the base of the primary cilium that prevents diffusion of transmembrane proteins between the cilia and plasma membranes: probably acts by regulating the assembly of the tectonic-like complex (also named B9 complex) by localizing TMEM231 protein. The sequence is that of Septin-2 from Bos taurus (Bovine).